We begin with the raw amino-acid sequence, 151 residues long: Protein NrdI (151 aa).

It belongs to the NrdI family.

In terms of biological role, probably involved in ribonucleotide reductase function. In Mesoplasma florum (strain ATCC 33453 / NBRC 100688 / NCTC 11704 / L1) (Acholeplasma florum), this protein is Protein NrdI.